The following is a 1107-amino-acid chain: Rho GTPase-activating protein 39 (1107 aa).

Residues 1–21 (MSQAQDYECRSHHVDEQEPRI) are disordered. Ser-2 is subject to N-acetylserine. The span at 7–19 (YECRSHHVDEQEP) shows a compositional bias: basic and acidic residues. WW domains lie at 25–58 (STRL…PPAG) and 63–97 (RTSE…RPQN). A compositionally biased stretch (polar residues) spans 111–122 (QNTESPRASADN). 4 disordered regions span residues 111 to 173 (QNTE…PPGV), 218 to 267 (PSFL…PERR), 282 to 311 (SPLL…LYEE), and 326 to 370 (MDVQ…LMRT). The segment covering 123–136 (SPGRGSRDGSTGSS) has biased composition (low complexity). Polar residues predominate over residues 242 to 254 (SGSQHSPNLQTFV). At Ser-282 the chain carries Phosphoserine. Composition is skewed to polar residues over residues 331-343 (EANS…SPQR) and 353-369 (LQTT…QLMR). A phosphoserine mark is found at Ser-380, Ser-384, Ser-402, and Ser-403. Disordered regions lie at residues 404-429 (PKLR…QPSP), 441-529 (SGDY…RASL), and 563-585 (MKQR…GAVP). Residues 470–484 (SWSSQQDTMSSTGYS) are compositionally biased toward polar residues. Ser-597, Ser-683, Ser-708, and Ser-719 each carry phosphoserine. The MyTH4 domain occupies 715–867 (WSSESIKKPM…PYVEEPDGVA (153 aa)). Positions 914 to 1102 (SALQEVMSMQ…VLIQHLDTSF (189 aa)) constitute a Rho-GAP domain.

The protein resides in the nucleus. This chain is Rho GTPase-activating protein 39 (Arhgap39), found in Mus musculus (Mouse).